We begin with the raw amino-acid sequence, 343 residues long: Oxygen-dependent coproporphyrinogen-III oxidase (343 aa).

Serine 99 is a substrate binding site. A divalent metal cation-binding residues include histidine 103 and histidine 113. Histidine 113 serves as the catalytic Proton donor. Residue 115–117 coordinates substrate; the sequence is NYR. Positions 147 and 177 each coordinate a divalent metal cation. The important for dimerization stretch occupies residues 267-302; that stretch reads YVEFNLVWDRGTIFGLQTNGRTESILMSLPPLARWE.

The protein belongs to the aerobic coproporphyrinogen-III oxidase family. Homodimer. A divalent metal cation is required as a cofactor.

Its subcellular location is the cytoplasm. The catalysed reaction is coproporphyrinogen III + O2 + 2 H(+) = protoporphyrinogen IX + 2 CO2 + 2 H2O. The protein operates within porphyrin-containing compound metabolism; protoporphyrin-IX biosynthesis; protoporphyrinogen-IX from coproporphyrinogen-III (O2 route): step 1/1. Its function is as follows. Involved in the heme and chlorophyll biosynthesis. Catalyzes the aerobic oxidative decarboxylation of propionate groups of rings A and B of coproporphyrinogen-III to yield the vinyl groups in protoporphyrinogen-IX. The chain is Oxygen-dependent coproporphyrinogen-III oxidase from Prochlorococcus marinus (strain SARG / CCMP1375 / SS120).